Here is a 147-residue protein sequence, read N- to C-terminus: MPGKKAPNGEFAGRKLKLKRKKFRWSDIRYKRRVLRLKEKSDPLEGAPQARGIVLEKIAVEAKQPNSGMRKAVRVQLIKNGKVVTAFCPGDGAIKFIDEHDEVIIEGIGGPKGGSMGDIPGIRYKVVKVNRVSLKELVKGRKEKPRR.

The protein belongs to the universal ribosomal protein uS12 family. As to quaternary structure, part of the 30S ribosomal subunit.

Its function is as follows. With S4 and S5 plays an important role in translational accuracy. Located at the interface of the 30S and 50S subunits. The protein is Small ribosomal subunit protein uS12 of Pyrococcus abyssi (strain GE5 / Orsay).